Reading from the N-terminus, the 948-residue chain is Alanine--tRNA ligase (948 aa).

Residues histidine 638, histidine 642, cysteine 739, and histidine 743 each coordinate Zn(2+).

Belongs to the class-II aminoacyl-tRNA synthetase family. Zn(2+) serves as cofactor.

The protein resides in the cytoplasm. The enzyme catalyses tRNA(Ala) + L-alanine + ATP = L-alanyl-tRNA(Ala) + AMP + diphosphate. Catalyzes the attachment of alanine to tRNA(Ala) in a two-step reaction: alanine is first activated by ATP to form Ala-AMP and then transferred to the acceptor end of tRNA(Ala). Also edits incorrectly charged Ser-tRNA(Ala) and Gly-tRNA(Ala) via its editing domain. This Paracidovorax citrulli (strain AAC00-1) (Acidovorax citrulli) protein is Alanine--tRNA ligase.